Here is a 211-residue protein sequence, read N- to C-terminus: Methylthioribulose-1-phosphate dehydratase (211 aa).

Residues H101 and H103 each coordinate Zn(2+).

This sequence belongs to the aldolase class II family. MtnB subfamily. The cofactor is Zn(2+).

It catalyses the reaction 5-(methylsulfanyl)-D-ribulose 1-phosphate = 5-methylsulfanyl-2,3-dioxopentyl phosphate + H2O. It functions in the pathway amino-acid biosynthesis; L-methionine biosynthesis via salvage pathway; L-methionine from S-methyl-5-thio-alpha-D-ribose 1-phosphate: step 2/6. Catalyzes the dehydration of methylthioribulose-1-phosphate (MTRu-1-P) into 2,3-diketo-5-methylthiopentyl-1-phosphate (DK-MTP-1-P). The polypeptide is Methylthioribulose-1-phosphate dehydratase (Alcanivorax borkumensis (strain ATCC 700651 / DSM 11573 / NCIMB 13689 / SK2)).